We begin with the raw amino-acid sequence, 491 residues long: Xaa-Pro aminopeptidase 1 (491 aa).

Residues 1 to 32 (MAEELTPENPAIPETPEETEEPIKQRKNGLYP) form a disordered region. The Mn(2+) site is built by D308, D320, H403, E434, and E458.

It belongs to the peptidase M24B family. As to quaternary structure, homodimer. Mn(2+) serves as cofactor.

The catalysed reaction is Release of any N-terminal amino acid, including proline, that is linked to proline, even from a dipeptide or tripeptide.. This Streptomyces coelicolor (strain ATCC BAA-471 / A3(2) / M145) protein is Xaa-Pro aminopeptidase 1 (pepPI).